Consider the following 290-residue polypeptide: Lipoyl synthase 2 (290 aa).

[4Fe-4S] cluster is bound by residues cysteine 37, cysteine 42, cysteine 48, cysteine 63, cysteine 67, cysteine 70, and serine 283. The Radical SAM core domain maps to 49 to 272; the sequence is YGQKTATFLL…GNIARELGFS (224 aa).

Belongs to the radical SAM superfamily. Lipoyl synthase family. Requires [4Fe-4S] cluster as cofactor.

It localises to the cytoplasm. The catalysed reaction is [[Fe-S] cluster scaffold protein carrying a second [4Fe-4S](2+) cluster] + N(6)-octanoyl-L-lysyl-[protein] + 2 oxidized [2Fe-2S]-[ferredoxin] + 2 S-adenosyl-L-methionine + 4 H(+) = [[Fe-S] cluster scaffold protein] + N(6)-[(R)-dihydrolipoyl]-L-lysyl-[protein] + 4 Fe(3+) + 2 hydrogen sulfide + 2 5'-deoxyadenosine + 2 L-methionine + 2 reduced [2Fe-2S]-[ferredoxin]. It participates in protein modification; protein lipoylation via endogenous pathway; protein N(6)-(lipoyl)lysine from octanoyl-[acyl-carrier-protein]: step 2/2. Catalyzes the radical-mediated insertion of two sulfur atoms into the C-6 and C-8 positions of the octanoyl moiety bound to the lipoyl domains of lipoate-dependent enzymes, thereby converting the octanoylated domains into lipoylated derivatives. The chain is Lipoyl synthase 2 from Thermosynechococcus vestitus (strain NIES-2133 / IAM M-273 / BP-1).